We begin with the raw amino-acid sequence, 178 residues long: Bifunctional protein PyrR (178 aa).

The short motif at 99-111 is the PRPP-binding element; sequence IIIIDDVLYTCRT.

The protein belongs to the purine/pyrimidine phosphoribosyltransferase family. PyrR subfamily. Homodimer and homohexamer; in equilibrium.

It carries out the reaction UMP + diphosphate = 5-phospho-alpha-D-ribose 1-diphosphate + uracil. Functionally, regulates transcriptional attenuation of the pyrimidine nucleotide (pyr) operon by binding in a uridine-dependent manner to specific sites on pyr mRNA. This disrupts an antiterminator hairpin in the RNA and favors formation of a downstream transcription terminator, leading to a reduced expression of downstream genes. In terms of biological role, also displays a weak uracil phosphoribosyltransferase activity which is not physiologically significant. This is Bifunctional protein PyrR from Clostridium beijerinckii (strain ATCC 51743 / NCIMB 8052) (Clostridium acetobutylicum).